The following is a 222-amino-acid chain: MAEAMSCSSEITEEFLCPVCQEILQTPVRTQTCRHVFCRKCFMLAMKSGGAYCPLCRGPVNKSERSAPVRATDIDLEMRMLSGGCMYCGKMMKLHYMKLHYKSCRKYQEEYGLSPKNVTIQTGQNSTKCQEPKYKCPLCSEHNLNQRSLLEHCNNVHYYEEVEMVCPICATLPWGDPIQTTGNVIAHLNARHQFNYQEFMNINIDEEAQFQIAVANSYKISR.

Residues 17–57 form an RING-type zinc finger; the sequence is CPVCQEILQTPVRTQTCRHVFCRKCFMLAMKSGGAYCPLCR. Positions 85, 88, 100, and 104 each coordinate Zn(2+). A C2HC RNF-type zinc finger spans residues 85–104; the sequence is CMYCGKMMKLHYMKLHYKSC. 2 consecutive C2H2-type zinc fingers follow at residues 134–157 and 164–192; these read YKCP…NNVH and MVCP…NARH. The UIM domain maps to 202 to 220; the sequence is INIDEEAQFQIAVANSYKI.

As to quaternary structure, interacts with nlk.2 (via C-terminus) and ube2k. In terms of processing, auto-ubiquitinated.

The protein resides in the chromosome. The enzyme catalyses S-ubiquitinyl-[E2 ubiquitin-conjugating enzyme]-L-cysteine + [acceptor protein]-L-lysine = [E2 ubiquitin-conjugating enzyme]-L-cysteine + N(6)-ubiquitinyl-[acceptor protein]-L-lysine.. Its pathway is protein modification; protein ubiquitination. Its function is as follows. E3 ubiquitin-protein ligase involved in DNA damage response by promoting DNA resection and homologous recombination. Recruited to sites of double-strand breaks following DNA damage and specifically promotes double-strand break repair via homologous recombination. Together with nlk.2, involved in the ubiquitination and degradation of TCF/LEF. Also exhibits auto-ubiquitination activity in combination with ube2k. May act as a negative regulator in the Wnt/beta-catenin-mediated signaling pathway. The polypeptide is E3 ubiquitin-protein ligase RNF138 (rnf138) (Xenopus laevis (African clawed frog)).